The following is a 117-amino-acid chain: Large ribosomal subunit protein bL20c (117 aa).

The protein belongs to the bacterial ribosomal protein bL20 family.

The protein resides in the plastid. Its function is as follows. Binds directly to 23S ribosomal RNA and is necessary for the in vitro assembly process of the 50S ribosomal subunit. It is not involved in the protein synthesizing functions of that subunit. The polypeptide is Large ribosomal subunit protein bL20c (rpl20) (Euglena longa (Euglenophycean alga)).